Here is a 303-residue protein sequence, read N- to C-terminus: Archaeosortase A (303 aa).

Helical transmembrane passes span 3–23, 36–56, 60–80, 93–113, 169–189, 200–220, and 259–279; these read GLLS…GAVA, TAAW…FTLV, YIEG…GWLL, AVAA…FTLL, VVLA…IAAV, LAIA…FIAI, and LAVV…PELL. The active-site Acyl-thioester intermediate is Cys-173. The active-site Proton donor is Arg-214.

The protein belongs to the exosortase/archaeosortase family. Archaeosortase A subfamily.

Its subcellular location is the cell membrane. Functionally, transpeptidase that recognizes and modifies its substrate by proteolytic cleavage of a sorting signal. Following cleavage, a covalent intermediate is formed via a thioester bond between the archaeosortase and its substrate, which is then transferred and covalently attached to the cell membrane. This sortase recognizes a tripartite structure consisting of a conserved Pro-Gly-Phe (PGF) motif, followed by a transmembrane alpha helix domain and a cluster of basic residues, usually at the C-terminus of target proteins. Confirmed substrates include the cell surface S-layer glycoprotein Csg and HVO_0405. ArtA is required for the C-terminal processing of Csg and for its lipidation and attachment to the archaeal plasma membrane. It is also required for the processing of HVO_0405, which contains an atypical central tripartite structure. This Haloferax volcanii (strain ATCC 29605 / DSM 3757 / JCM 8879 / NBRC 14742 / NCIMB 2012 / VKM B-1768 / DS2) (Halobacterium volcanii) protein is Archaeosortase A.